The following is a 366-amino-acid chain: Glycine betaine monooxygenase reductase subunit (366 aa).

An FAD-binding FR-type domain is found at 16–119 (NGRHLVRCVK…HGPVGLFNAI (104 aa)). In terms of domain architecture, 2Fe-2S ferredoxin-type spans 282–366 (HQVEFTATGK…VPKGDVVIDY (85 aa)). [2Fe-2S] cluster-binding residues include cysteine 316, cysteine 321, cysteine 324, and cysteine 354.

The protein in the N-terminal section; belongs to the FAD-binding oxidoreductase type 6 family. The system is composed of an oxygenase subunit (GbcA) and a reductase subunit (GbcB). FAD is required as a cofactor. Requires [2Fe-2S] cluster as cofactor.

The catalysed reaction is glycine betaine + NADH + O2 + H(+) = N,N-dimethylglycine + formaldehyde + NAD(+) + H2O. Involved in degradation of glycine betaine. Part of a Rieske-type oxygenase system that catalyzes the conversion of glycine betaine (GB) to dimethylglycine (DMG). This subunit is the ferredoxin reductase component of the system. Required for growth on choline and GB, but not for growth on DMG. The protein is Glycine betaine monooxygenase reductase subunit of Pseudomonas aeruginosa (strain ATCC 15692 / DSM 22644 / CIP 104116 / JCM 14847 / LMG 12228 / 1C / PRS 101 / PAO1).